The primary structure comprises 372 residues: E3 ubiquitin-protein ligase RNF34 (372 aa).

The segment at Glu56–Glu107 adopts an FYVE-type zinc-finger fold. Positions Leu115–Ile134 constitute an SAP 1 domain. Ser169 is modified (phosphoserine). The segment at Gln194 to Ala253 is disordered. A compositionally biased stretch (polar residues) spans Asp201 to Asn220. Over residues Thr221–Ala239 the composition is skewed to acidic residues. Basic and acidic residues predominate over residues Glu240–Arg252. Phosphoserine is present on residues Ser254 and Ser256. Positions Val264 to Arg278 constitute an SAP 2 domain. The segment at Cys325 to Arg360 adopts an RING-type zinc-finger fold.

Interacts with CASP8 and CASP10. Interacts (via RING-type zinc finger) with PPARGC1A. Interacts with NOD1. Interacts with p53/TP53; involved in p53/TP53 ubiquitination. Interacts (via RING-type zinc finger) with MDM2; the interaction stabilizes MDM2. Autoubiquitinated (in vitro). Post-translationally, proteolytically cleaved by caspases upon induction of apoptosis by TNF. Ubiquitous. Detected in heart, brain, liver, skeletal muscle, kidney, pancreas, spleen, thymus, prostate, testis, ovary, colon and leukocytes.

The protein resides in the cell membrane. It localises to the endomembrane system. The protein localises to the nucleus. It is found in the nucleus speckle. Its subcellular location is the cytoplasm. The protein resides in the cytosol. The catalysed reaction is S-ubiquitinyl-[E2 ubiquitin-conjugating enzyme]-L-cysteine + [acceptor protein]-L-lysine = [E2 ubiquitin-conjugating enzyme]-L-cysteine + N(6)-ubiquitinyl-[acceptor protein]-L-lysine.. Its pathway is protein modification; protein ubiquitination. E3 ubiquitin-protein ligase that regulates several biological processes through the ubiquitin-mediated proteasomal degradation of various target proteins. Ubiquitinates the caspases CASP8 and CASP10, promoting their proteasomal degradation, to negatively regulate cell death downstream of death domain receptors in the extrinsic pathway of apoptosis. May mediate 'Lys-48'-linked polyubiquitination of RIPK1 and its subsequent proteasomal degradation thereby indirectly regulating the tumor necrosis factor-mediated signaling pathway. Negatively regulates p53/TP53 through its direct ubiquitination and targeting to proteasomal degradation. Indirectly, may also negatively regulate p53/TP53 through ubiquitination and degradation of SFN. Mediates PPARGC1A proteasomal degradation probably through ubiquitination thereby indirectly regulating the metabolism of brown fat cells. Possibly involved in innate immunity, through 'Lys-48'-linked polyubiquitination of NOD1 and its subsequent proteasomal degradation. This Homo sapiens (Human) protein is E3 ubiquitin-protein ligase RNF34.